The chain runs to 617 residues: Regulatory solute carrier protein family 1 member 1 (617 aa).

A compositionally biased stretch (polar residues) spans 1–22 (MSSLPTSDGFNHPARSSGQSPD). Disordered regions lie at residues 1–106 (MSSL…EITV), 155–181 (ENQNLSQVSDPQQHEEPGNEQYEVAQQ), and 217–237 (KGNGLPQNVDPPSAKKSIPSS). 2 stretches are compositionally biased toward basic and acidic residues: residues 43 to 52 (SDSDRIEPKA) and 66 to 83 (SEKKEHLSLQDLSDHASS). Polar residues-rich tracts occupy residues 89–103 (TDQSPAMPMQNSSEE) and 155–165 (ENQNLSQVSDP). The tract at residues 410–412 (QCP) is involved in post-transcriptional down-regulation of SLC5A1. The UBA domain maps to 571–611 (IFPATDIDRILRAGFTLQEALGALHRVGGNADLALLVLLAK).

As to quaternary structure, interacts with YRDC. As to expression, expressed in small intestine, kidney and brain.

The protein localises to the cell membrane. The protein resides in the nucleus. It is found in the golgi apparatus. Its subcellular location is the trans-Golgi network. In terms of biological role, mediates transcriptional and post-transcriptional regulation of SLC5A1. Inhibits a dynamin and PKC-dependent exocytotic pathway of SLC5A1. Also involved in transcriptional regulation of SLC22A2. Exhibits glucose-dependent, short-term inhibition of SLC5A1 and SLC22A2 by inhibiting the release of vesicles from the trans-Golgi network. The protein is Regulatory solute carrier protein family 1 member 1 (RSC1A1) of Homo sapiens (Human).